A 265-amino-acid polypeptide reads, in one-letter code: Undecaprenyl-diphosphatase (265 aa).

The next 7 helical transmembrane spans lie at 38-58 (SDMFNIVIQAGAILAVTIIYW), 80-100 (LIVAFLITAILGLVVKKLGFE), 107-127 (PIAWALIIGGIWMIFAEWAAA), 135-155 (ITWLVAILVGIAQIVAGVFPG), 175-195 (AAATEFAFLVGIPTMYAASGY), 213-233 (ALAIAFVVSTIVAFIAVKWLL), and 244-264 (FAIYRIILGVLLLGMTATGMI).

This sequence belongs to the UppP family.

It is found in the cell inner membrane. The enzyme catalyses di-trans,octa-cis-undecaprenyl diphosphate + H2O = di-trans,octa-cis-undecaprenyl phosphate + phosphate + H(+). In terms of biological role, catalyzes the dephosphorylation of undecaprenyl diphosphate (UPP). Confers resistance to bacitracin. This chain is Undecaprenyl-diphosphatase, found in Rhizobium etli (strain ATCC 51251 / DSM 11541 / JCM 21823 / NBRC 15573 / CFN 42).